Consider the following 111-residue polypeptide: Flagellar hook-basal body complex protein FliE (111 aa).

The protein belongs to the FliE family.

Its subcellular location is the bacterial flagellum basal body. In Clostridium acetobutylicum (strain ATCC 824 / DSM 792 / JCM 1419 / IAM 19013 / LMG 5710 / NBRC 13948 / NRRL B-527 / VKM B-1787 / 2291 / W), this protein is Flagellar hook-basal body complex protein FliE.